A 154-amino-acid polypeptide reads, in one-letter code: Calmodulin-like protein 6 (154 aa).

4 consecutive EF-hand domains span residues 1-36, 37-72, 77-112, and 115-150; these read MDSTELNRVFQMFDKDGDGKITTKELNESFKNLGII, IPEDELTQIIQKIDVNGDGCVDIEEFGELYKTIMVE, VGEEDMKEAFNVFDRNGDGFITVDELKAVLSSLGLK, and KTLEECRKMIMQVDVDGDGRVNYMEFRQMMKKGRFF. The Ca(2+) site is built by Asp-14, Asp-16, Asp-18, Lys-20, Glu-25, Asp-50, Asn-52, Asp-54, Cys-56, Glu-61, Asp-90, Asn-92, Asp-94, Glu-101, Asp-128, Asp-130, Asp-132, Arg-134, and Glu-139.

This sequence belongs to the calmodulin family.

Its function is as follows. Potential calcium sensor. The chain is Calmodulin-like protein 6 (CML6) from Arabidopsis thaliana (Mouse-ear cress).